Reading from the N-terminus, the 620-residue chain is Proline--tRNA ligase (620 aa).

Belongs to the class-II aminoacyl-tRNA synthetase family. ProS type 1 subfamily. Homodimer.

It localises to the cytoplasm. The catalysed reaction is tRNA(Pro) + L-proline + ATP = L-prolyl-tRNA(Pro) + AMP + diphosphate. In terms of biological role, catalyzes the attachment of proline to tRNA(Pro) in a two-step reaction: proline is first activated by ATP to form Pro-AMP and then transferred to the acceptor end of tRNA(Pro). As ProRS can inadvertently accommodate and process non-cognate amino acids such as alanine and cysteine, to avoid such errors it has two additional distinct editing activities against alanine. One activity is designated as 'pretransfer' editing and involves the tRNA(Pro)-independent hydrolysis of activated Ala-AMP. The other activity is designated 'posttransfer' editing and involves deacylation of mischarged Ala-tRNA(Pro). The misacylated Cys-tRNA(Pro) is not edited by ProRS. The polypeptide is Proline--tRNA ligase (Streptococcus thermophilus (strain CNRZ 1066)).